The sequence spans 754 residues: 5-methyltetrahydropteroyltriglutamate--homocysteine methyltransferase (754 aa).

5-methyltetrahydropteroyltri-L-glutamate is bound by residues 17–20 (RELK) and lysine 110. L-homocysteine-binding positions include 421–423 (IGS) and glutamate 474. L-methionine is bound by residues 421-423 (IGS) and glutamate 474. 5-methyltetrahydropteroyltri-L-glutamate-binding positions include 505–506 (RC) and tryptophan 551. Aspartate 589 contacts L-homocysteine. Aspartate 589 contacts L-methionine. Position 595 (glutamate 595) interacts with 5-methyltetrahydropteroyltri-L-glutamate. 3 residues coordinate Zn(2+): histidine 631, cysteine 633, and glutamate 655. Catalysis depends on histidine 684, which acts as the Proton donor. Cysteine 716 contacts Zn(2+).

This sequence belongs to the vitamin-B12 independent methionine synthase family. Zn(2+) serves as cofactor.

It carries out the reaction 5-methyltetrahydropteroyltri-L-glutamate + L-homocysteine = tetrahydropteroyltri-L-glutamate + L-methionine. It functions in the pathway amino-acid biosynthesis; L-methionine biosynthesis via de novo pathway; L-methionine from L-homocysteine (MetE route): step 1/1. Catalyzes the transfer of a methyl group from 5-methyltetrahydrofolate to homocysteine resulting in methionine formation. This is 5-methyltetrahydropteroyltriglutamate--homocysteine methyltransferase from Synechococcus sp. (strain JA-2-3B'a(2-13)) (Cyanobacteria bacterium Yellowstone B-Prime).